The following is a 206-amino-acid chain: Small ribosomal subunit protein uS4 (206 aa).

Positions G96–K156 constitute an S4 RNA-binding domain.

Belongs to the universal ribosomal protein uS4 family. Part of the 30S ribosomal subunit. Contacts protein S5. The interaction surface between S4 and S5 is involved in control of translational fidelity.

In terms of biological role, one of the primary rRNA binding proteins, it binds directly to 16S rRNA where it nucleates assembly of the body of the 30S subunit. Functionally, with S5 and S12 plays an important role in translational accuracy. This is Small ribosomal subunit protein uS4 from Cronobacter sakazakii (strain ATCC BAA-894) (Enterobacter sakazakii).